We begin with the raw amino-acid sequence, 111 residues long: Disintegrin piscivostatin-alpha (111 aa).

Residues 1–20 form the signal peptide; it reads MIQVLLVTICLAVFPYQGSS. Residues 21–44 constitute a propeptide that is removed on maturation; sequence IILESGNVNDYEVVYPRKITPLPK. One can recognise a Disintegrin domain in the interval 45-111; the sequence is GAVQPKNPCC…GDCPRKHFYA (67 aa). Cystine bridges form between Cys-53–Cys-76, Cys-67–Cys-73, Cys-72–Cys-97, and Cys-85–Cys-104. The Cell attachment site signature appears at 89-91; the sequence is RGD. The propeptide occupies 110–111; the sequence is YA.

Belongs to the disintegrin family. Dimeric disintegrin subfamily. Heterodimer with piscivostatin-beta; disulfide-linked. Expressed by the venom gland.

The protein localises to the secreted. Its function is as follows. Inhibits fibrinogen interaction with platelets. Acts by binding to alpha-IIb/beta-3 (ITGA2B/ITGB3) on the platelet surface and inhibits both ADP-induced platelet aggregation and platelet aggregate dissociation in human platelet-rich plasma. In Agkistrodon piscivorus piscivorus (Eastern cottonmouth), this protein is Disintegrin piscivostatin-alpha.